Here is a 549-residue protein sequence, read N- to C-terminus: DDB1- and CUL4-associated factor 11 (549 aa).

A compositionally biased stretch (low complexity) spans 1 to 24 (MGSRNSSSAGSGSLEPSEGLSRRG). Positions 1 to 40 (MGSRNSSSAGSGSLEPSEGLSRRGTGLRRSEEEEEEDEDV) are disordered. Residues Ser73 and Ser75 each carry the phosphoserine modification. WD repeat units lie at residues 170–210 (TYSQ…HKFK), 216–258 (DVGW…TALD), 263–302 (ERRFAVFSIAVSSDGREVLGGANDGCLYVFDREQNRRTLQ), 305–345 (SHED…EDDP), 353–392 (GHQDGITFIDSKGDARYLISNSKDQTIKLWDIRRFSSREG), 435–480 (GVLH…KKLT), and 481–520 (NHKACVRDVSWHPFEEKIVSSSWDGNLRLWQYRQAEYFQD).

Interacts with DDB1 and CUL4A.

Its pathway is protein modification; protein ubiquitination. In terms of biological role, may function as a substrate receptor for CUL4-DDB1 E3 ubiquitin-protein ligase complex. In Mus musculus (Mouse), this protein is DDB1- and CUL4-associated factor 11 (Dcaf11).